The sequence spans 153 residues: 3-hydroxyacyl-[acyl-carrier-protein] dehydratase FabZ (153 aa).

The active site involves His-57.

Belongs to the thioester dehydratase family. FabZ subfamily.

Its subcellular location is the cytoplasm. The catalysed reaction is a (3R)-hydroxyacyl-[ACP] = a (2E)-enoyl-[ACP] + H2O. Its function is as follows. Involved in unsaturated fatty acids biosynthesis. Catalyzes the dehydration of short chain beta-hydroxyacyl-ACPs and long chain saturated and unsaturated beta-hydroxyacyl-ACPs. The polypeptide is 3-hydroxyacyl-[acyl-carrier-protein] dehydratase FabZ (Xanthomonas oryzae pv. oryzae (strain MAFF 311018)).